The chain runs to 343 residues: ELAV-like protein 3 (343 aa).

RRM domains follow at residues 35–113, 121–202, and 260–338; these read TNLI…YARP, ANLY…FANN, and WCIF…FKTS.

This sequence belongs to the RRM elav family.

In terms of biological role, RNA-binding protein that binds to AU-rich sequences (AREs) of target mRNAs. May also bind poly-A tracts via RRM 3. May be involved in neuronal differentiation and maintenance. The polypeptide is ELAV-like protein 3 (Xenopus tropicalis (Western clawed frog)).